The sequence spans 337 residues: Glyceraldehyde-3-phosphate dehydrogenase (337 aa).

NAD(+)-binding positions include 17–18 (RI), D39, K83, and S125. D-glyceraldehyde 3-phosphate is bound by residues 156–158 (SCT), T187, R202, 215–216 (TG), and R238. C157 serves as the catalytic Nucleophile. N319 serves as a coordination point for NAD(+).

This sequence belongs to the glyceraldehyde-3-phosphate dehydrogenase family. In terms of assembly, homotetramer.

The protein localises to the cytoplasm. The catalysed reaction is D-glyceraldehyde 3-phosphate + phosphate + NAD(+) = (2R)-3-phospho-glyceroyl phosphate + NADH + H(+). Its pathway is carbohydrate degradation; glycolysis; pyruvate from D-glyceraldehyde 3-phosphate: step 1/5. In terms of biological role, catalyzes the oxidative phosphorylation of glyceraldehyde 3-phosphate (G3P) to 1,3-bisphosphoglycerate (BPG) using the cofactor NAD. The first reaction step involves the formation of a hemiacetal intermediate between G3P and a cysteine residue, and this hemiacetal intermediate is then oxidized to a thioester, with concomitant reduction of NAD to NADH. The reduced NADH is then exchanged with the second NAD, and the thioester is attacked by a nucleophilic inorganic phosphate to produce BPG. The polypeptide is Glyceraldehyde-3-phosphate dehydrogenase (gapA) (Mycoplasma pneumoniae (strain ATCC 29342 / M129 / Subtype 1) (Mycoplasmoides pneumoniae)).